We begin with the raw amino-acid sequence, 569 residues long: Toxin YxiD (569 aa).

In terms of domain architecture, LXG spans 1-235 (MKTLDVHALH…NPQMKQADDS (235 aa)). The stretch at 8–91 (ALHEGIQHTI…QHAISSVESN (84 aa)) forms a coiled coil. The segment at 548–569 (HQAGIHGTGSPANELFKGGKKK) is disordered.

In the N-terminal section; belongs to the LXG family. Probably interacts with cognate immunity protein YxxD but not with non-cognate immunity proteins. The interaction inhibits the toxic activity of YxxD.

The protein resides in the secreted. Toxic component of one of 6 LXG toxin-immunity modules in this strain. They promote kin selection, mediate competition in biofilms, and drive spatial segregation of different strains, indicating that LXG toxins may help avoid warfare between strains in biofilms. Mediates intercellular competition during biofilm formation; disruption of the operon disadvantages the bacteria, but overexpression of the cognate immunity protein restores growth in competition with wild-type. Overexpression alone in situ causes growth arrest but not cell lysis, a large decrease in chromosomal DNA content and the production of anucleate cells. No effect is seen on rRNA. Co-overexpression with cognate immunity protein YxxD does not cause growth arrest. The toxic effect is not dependent on the epsA and tapA operons which are required for biofilm formation. The chain is Toxin YxiD (yxiD) from Bacillus subtilis (strain 168).